Here is a 373-residue protein sequence, read N- to C-terminus: tRNA-specific 2-thiouridylase MnmA (373 aa).

ATP contacts are provided by residues glycine 12–serine 19 and methionine 38. The interval asparagine 98–aspartate 100 is interaction with target base in tRNA. Cysteine 103 serves as the catalytic Nucleophile. Cysteine 103 and cysteine 200 are joined by a disulfide. Glycine 127 serves as a coordination point for ATP. Residues lysine 150–glutamine 152 form an interaction with tRNA region. The active-site Cysteine persulfide intermediate is the cysteine 200. The interval arginine 312–tyrosine 313 is interaction with tRNA.

Belongs to the MnmA/TRMU family.

The protein resides in the cytoplasm. The enzyme catalyses S-sulfanyl-L-cysteinyl-[protein] + uridine(34) in tRNA + AH2 + ATP = 2-thiouridine(34) in tRNA + L-cysteinyl-[protein] + A + AMP + diphosphate + H(+). Functionally, catalyzes the 2-thiolation of uridine at the wobble position (U34) of tRNA, leading to the formation of s(2)U34. This chain is tRNA-specific 2-thiouridylase MnmA, found in Streptococcus pyogenes serotype M3 (strain SSI-1).